A 146-amino-acid chain; its full sequence is Hemoglobin A/D subunit beta (146 aa).

The 145-residue stretch at 2-146 folds into the Globin domain; the sequence is HWTSEEKQYI…VAHALALGYH (145 aa). Residues His63 and His92 each coordinate heme b.

The protein belongs to the globin family. In terms of assembly, hemoglobins A and D are heterotetramers of alpha-1, alpha-2 and two identical beta chains. As to expression, red blood cells.

In terms of biological role, involved in oxygen transport from the lung to the various peripheral tissues. This chain is Hemoglobin A/D subunit beta, found in Aldabrachelys gigantea (Aldabra giant tortoise).